The sequence spans 245 residues: Phosphoadenosine 5'-phosphosulfate reductase (245 aa).

C239 functions as the Nucleophile; cysteine thiosulfonate intermediate in the catalytic mechanism.

It belongs to the PAPS reductase family. CysH subfamily.

Its subcellular location is the cytoplasm. It carries out the reaction [thioredoxin]-disulfide + sulfite + adenosine 3',5'-bisphosphate + 2 H(+) = [thioredoxin]-dithiol + 3'-phosphoadenylyl sulfate. Its pathway is sulfur metabolism; hydrogen sulfide biosynthesis; sulfite from sulfate: step 3/3. In terms of biological role, catalyzes the formation of sulfite from phosphoadenosine 5'-phosphosulfate (PAPS) using thioredoxin as an electron donor. The protein is Phosphoadenosine 5'-phosphosulfate reductase of Alkalilimnicola ehrlichii (strain ATCC BAA-1101 / DSM 17681 / MLHE-1).